The primary structure comprises 1435 residues: DNA polymerase III PolC-type (1435 aa).

The 157-residue stretch at 420–576 (YVVFDVETTG…YDTEATAYIF (157 aa)) folds into the Exonuclease domain.

Belongs to the DNA polymerase type-C family. PolC subfamily.

Its subcellular location is the cytoplasm. The enzyme catalyses DNA(n) + a 2'-deoxyribonucleoside 5'-triphosphate = DNA(n+1) + diphosphate. Its function is as follows. Required for replicative DNA synthesis. This DNA polymerase also exhibits 3' to 5' exonuclease activity. The sequence is that of DNA polymerase III PolC-type from Staphylococcus aureus.